The sequence spans 416 residues: UDP-N-acetylmuramoylalanine--D-glutamate ligase (416 aa).

104–110 (GSNGKST) contacts ATP.

Belongs to the MurCDEF family.

It localises to the cytoplasm. It carries out the reaction UDP-N-acetyl-alpha-D-muramoyl-L-alanine + D-glutamate + ATP = UDP-N-acetyl-alpha-D-muramoyl-L-alanyl-D-glutamate + ADP + phosphate + H(+). It functions in the pathway cell wall biogenesis; peptidoglycan biosynthesis. In terms of biological role, cell wall formation. Catalyzes the addition of glutamate to the nucleotide precursor UDP-N-acetylmuramoyl-L-alanine (UMA). The sequence is that of UDP-N-acetylmuramoylalanine--D-glutamate ligase from Francisella tularensis subsp. tularensis (strain WY96-3418).